We begin with the raw amino-acid sequence, 50 residues long: Sproutin (50 aa).

Position 8 is a phosphoserine; by PKC (serine 8).

Brain.

In terms of biological role, neurite outgrowth factor. The protein is Sproutin of Rattus norvegicus (Rat).